A 333-amino-acid polypeptide reads, in one-letter code: Holliday junction branch migration complex subunit RuvB (333 aa).

Positions 1–182 (MEERMVSAEA…FGVMARLEYY (182 aa)) are large ATPase domain (RuvB-L). ATP-binding positions include Ile21, Arg22, Gly63, Lys66, Thr67, Thr68, 129–131 (EDY), Arg172, Tyr182, and Arg219. Residue Thr67 coordinates Mg(2+). The small ATPAse domain (RuvB-S) stretch occupies residues 183–253 (NVEELTTIIE…RAIESLERLQ (71 aa)). Residues 256-333 (RLGLDHIDHK…EHFNMEVPNK (78 aa)) are head domain (RuvB-H). 2 residues coordinate DNA: Arg311 and Arg316.

The protein belongs to the RuvB family. Homohexamer. Forms an RuvA(8)-RuvB(12)-Holliday junction (HJ) complex. HJ DNA is sandwiched between 2 RuvA tetramers; dsDNA enters through RuvA and exits via RuvB. An RuvB hexamer assembles on each DNA strand where it exits the tetramer. Each RuvB hexamer is contacted by two RuvA subunits (via domain III) on 2 adjacent RuvB subunits; this complex drives branch migration. In the full resolvosome a probable DNA-RuvA(4)-RuvB(12)-RuvC(2) complex forms which resolves the HJ.

The protein localises to the cytoplasm. It carries out the reaction ATP + H2O = ADP + phosphate + H(+). Functionally, the RuvA-RuvB-RuvC complex processes Holliday junction (HJ) DNA during genetic recombination and DNA repair, while the RuvA-RuvB complex plays an important role in the rescue of blocked DNA replication forks via replication fork reversal (RFR). RuvA specifically binds to HJ cruciform DNA, conferring on it an open structure. The RuvB hexamer acts as an ATP-dependent pump, pulling dsDNA into and through the RuvAB complex. RuvB forms 2 homohexamers on either side of HJ DNA bound by 1 or 2 RuvA tetramers; 4 subunits per hexamer contact DNA at a time. Coordinated motions by a converter formed by DNA-disengaged RuvB subunits stimulates ATP hydrolysis and nucleotide exchange. Immobilization of the converter enables RuvB to convert the ATP-contained energy into a lever motion, pulling 2 nucleotides of DNA out of the RuvA tetramer per ATP hydrolyzed, thus driving DNA branch migration. The RuvB motors rotate together with the DNA substrate, which together with the progressing nucleotide cycle form the mechanistic basis for DNA recombination by continuous HJ branch migration. Branch migration allows RuvC to scan DNA until it finds its consensus sequence, where it cleaves and resolves cruciform DNA. The protein is Holliday junction branch migration complex subunit RuvB of Halalkalibacterium halodurans (strain ATCC BAA-125 / DSM 18197 / FERM 7344 / JCM 9153 / C-125) (Bacillus halodurans).